The chain runs to 260 residues: tRNA (guanine-N(1)-)-methyltransferase (260 aa).

Residues G117 and 137 to 142 each bind S-adenosyl-L-methionine; that span reads LGDFVL.

The protein belongs to the RNA methyltransferase TrmD family. As to quaternary structure, homodimer.

It is found in the cytoplasm. The catalysed reaction is guanosine(37) in tRNA + S-adenosyl-L-methionine = N(1)-methylguanosine(37) in tRNA + S-adenosyl-L-homocysteine + H(+). Functionally, specifically methylates guanosine-37 in various tRNAs. This Cupriavidus metallidurans (strain ATCC 43123 / DSM 2839 / NBRC 102507 / CH34) (Ralstonia metallidurans) protein is tRNA (guanine-N(1)-)-methyltransferase.